The sequence spans 188 residues: Pyridoxal 5'-phosphate synthase subunit PdxT (188 aa).

47-49 contributes to the L-glutamine binding site; it reads GES. The active-site Nucleophile is cysteine 79. Residues arginine 105 and 134–135 each bind L-glutamine; that span reads IR. Active-site charge relay system residues include histidine 170 and glutamate 172.

This sequence belongs to the glutaminase PdxT/SNO family. As to quaternary structure, in the presence of PdxS, forms a dodecamer of heterodimers. Only shows activity in the heterodimer.

The enzyme catalyses aldehydo-D-ribose 5-phosphate + D-glyceraldehyde 3-phosphate + L-glutamine = pyridoxal 5'-phosphate + L-glutamate + phosphate + 3 H2O + H(+). The catalysed reaction is L-glutamine + H2O = L-glutamate + NH4(+). It functions in the pathway cofactor biosynthesis; pyridoxal 5'-phosphate biosynthesis. Functionally, catalyzes the hydrolysis of glutamine to glutamate and ammonia as part of the biosynthesis of pyridoxal 5'-phosphate. The resulting ammonia molecule is channeled to the active site of PdxS. The sequence is that of Pyridoxal 5'-phosphate synthase subunit PdxT from Listeria monocytogenes serotype 4a (strain HCC23).